A 210-amino-acid polypeptide reads, in one-letter code: Glycerol-3-phosphate acyltransferase 2 (210 aa).

Transmembrane regions (helical) follow at residues 4–24 (LIMVIIALIAAYFIGSTPAPY), 52–72 (VGFWPGILVLTTDIGKGALAM), 73–93 (AVANWLGEGLGIQMLCALMAI), 114–134 (IGILAYMMPEGIPIYIACFLI), 141–161 (FPTLSYGISFISFILVAWLGQ), and 163–183 (DMGKVLFSLLVVMIPILMYIP).

It belongs to the PlsY family. Probably interacts with PlsX.

It localises to the cell membrane. It catalyses the reaction an acyl phosphate + sn-glycerol 3-phosphate = a 1-acyl-sn-glycero-3-phosphate + phosphate. The protein operates within lipid metabolism; phospholipid metabolism. Functionally, catalyzes the transfer of an acyl group from acyl-phosphate (acyl-PO(4)) to glycerol-3-phosphate (G3P) to form lysophosphatidic acid (LPA). This enzyme utilizes acyl-phosphate as fatty acyl donor, but not acyl-CoA or acyl-ACP. The polypeptide is Glycerol-3-phosphate acyltransferase 2 (Dehalococcoides mccartyi (strain CBDB1)).